Here is a 221-residue protein sequence, read N- to C-terminus: Protein LURP-one-related 17 (221 aa).

The segment at 1 to 20 (MFPFLKQRSRSVHGEDAPSS) is disordered.

It belongs to the LOR family.

Functionally, might be related to the phospholipid scramblase and tubby-like superfamily of membrane tethered transcription factors. This Arabidopsis thaliana (Mouse-ear cress) protein is Protein LURP-one-related 17.